The primary structure comprises 881 residues: Valine--tRNA ligase (881 aa).

The short motif at 76–86 (PTVSGSLHIGH) is the 'HIGH' region element. The tract at residues 493 to 526 (DSPILPDESQLPVDPSSQAPEGYTEDQRGKPGGF) is disordered. The short motif at 608 to 612 (KMSKS) is the 'KMSKS' region element. ATP is bound at residue lysine 611.

It belongs to the class-I aminoacyl-tRNA synthetase family. ValS type 2 subfamily. In terms of assembly, monomer.

Its subcellular location is the cytoplasm. It catalyses the reaction tRNA(Val) + L-valine + ATP = L-valyl-tRNA(Val) + AMP + diphosphate. In terms of biological role, catalyzes the attachment of valine to tRNA(Val). As ValRS can inadvertently accommodate and process structurally similar amino acids such as threonine, to avoid such errors, it has a 'posttransfer' editing activity that hydrolyzes mischarged Thr-tRNA(Val) in a tRNA-dependent manner. The sequence is that of Valine--tRNA ligase from Thermobifida fusca (strain YX).